Here is a 149-residue protein sequence, read N- to C-terminus: Large ribosomal subunit protein uL11 (149 aa).

The protein belongs to the universal ribosomal protein uL11 family. Part of the ribosomal stalk of the 50S ribosomal subunit. Interacts with L10 and the large rRNA to form the base of the stalk. L10 forms an elongated spine to which L12 dimers bind in a sequential fashion forming a multimeric L10(L12)X complex. In terms of processing, one or more lysine residues are methylated.

Forms part of the ribosomal stalk which helps the ribosome interact with GTP-bound translation factors. The polypeptide is Large ribosomal subunit protein uL11 (Methylobacterium radiotolerans (strain ATCC 27329 / DSM 1819 / JCM 2831 / NBRC 15690 / NCIMB 10815 / 0-1)).